The following is a 425-amino-acid chain: Gamma-glutamyl phosphate reductase (425 aa).

It belongs to the gamma-glutamyl phosphate reductase family.

The protein localises to the cytoplasm. It catalyses the reaction L-glutamate 5-semialdehyde + phosphate + NADP(+) = L-glutamyl 5-phosphate + NADPH + H(+). It functions in the pathway amino-acid biosynthesis; L-proline biosynthesis; L-glutamate 5-semialdehyde from L-glutamate: step 2/2. Catalyzes the NADPH-dependent reduction of L-glutamate 5-phosphate into L-glutamate 5-semialdehyde and phosphate. The product spontaneously undergoes cyclization to form 1-pyrroline-5-carboxylate. The protein is Gamma-glutamyl phosphate reductase of Novosphingobium aromaticivorans (strain ATCC 700278 / DSM 12444 / CCUG 56034 / CIP 105152 / NBRC 16084 / F199).